The primary structure comprises 433 residues: Probable carboxypeptidase ATEG_02905 (433 aa).

An N-terminal signal peptide occupies residues 1 to 18 (MKSAISLLLASAATYVGA). The segment at 20–40 (PHPEPPQLVLSPSTSTGVHGD) is disordered. A glycan (N-linked (GlcNAc...) asparagine) is linked at Asn92. Asp161 provides a ligand contact to Zn(2+). Catalysis depends on Glu193, which acts as the Proton acceptor. Position 194 (Glu194) interacts with Zn(2+).

Belongs to the peptidase M20A family. Zn(2+) is required as a cofactor.

It localises to the secreted. This Aspergillus terreus (strain NIH 2624 / FGSC A1156) protein is Probable carboxypeptidase ATEG_02905.